A 187-amino-acid chain; its full sequence is Adenine phosphoribosyltransferase (187 aa).

The protein belongs to the purine/pyrimidine phosphoribosyltransferase family. As to quaternary structure, homodimer.

It is found in the cytoplasm. The catalysed reaction is AMP + diphosphate = 5-phospho-alpha-D-ribose 1-diphosphate + adenine. Its pathway is purine metabolism; AMP biosynthesis via salvage pathway; AMP from adenine: step 1/1. Its function is as follows. Catalyzes a salvage reaction resulting in the formation of AMP, that is energically less costly than de novo synthesis. In Paracoccus denitrificans (strain Pd 1222), this protein is Adenine phosphoribosyltransferase.